Here is a 427-residue protein sequence, read N- to C-terminus: Enolase (427 aa).

Glutamine 162 serves as a coordination point for (2R)-2-phosphoglycerate. Glutamate 204 (proton donor) is an active-site residue. Residues aspartate 241, glutamate 284, and aspartate 311 each coordinate Mg(2+). The (2R)-2-phosphoglycerate site is built by lysine 336, arginine 365, serine 366, and lysine 387. The active-site Proton acceptor is the lysine 336.

The protein belongs to the enolase family. Mg(2+) serves as cofactor.

The protein resides in the cytoplasm. It is found in the secreted. The protein localises to the cell surface. It carries out the reaction (2R)-2-phosphoglycerate = phosphoenolpyruvate + H2O. It participates in carbohydrate degradation; glycolysis; pyruvate from D-glyceraldehyde 3-phosphate: step 4/5. In terms of biological role, catalyzes the reversible conversion of 2-phosphoglycerate (2-PG) into phosphoenolpyruvate (PEP). It is essential for the degradation of carbohydrates via glycolysis. The protein is Enolase of Natranaerobius thermophilus (strain ATCC BAA-1301 / DSM 18059 / JW/NM-WN-LF).